Consider the following 330-residue polypeptide: DNA-directed RNA polymerase subunit alpha (330 aa).

The segment at 1–231 is alpha N-terminal domain (alpha-NTD); sequence MQTNLLKPKT…EQLAVFAQLE (231 aa). Residues 250-330 form an alpha C-terminal domain (alpha-CTD) region; the sequence is FDPILLRPVD…NWPPAGLDKR (81 aa).

Belongs to the RNA polymerase alpha chain family. In terms of assembly, homodimer. The RNAP catalytic core consists of 2 alpha, 1 beta, 1 beta' and 1 omega subunit. When a sigma factor is associated with the core the holoenzyme is formed, which can initiate transcription.

The catalysed reaction is RNA(n) + a ribonucleoside 5'-triphosphate = RNA(n+1) + diphosphate. Its function is as follows. DNA-dependent RNA polymerase catalyzes the transcription of DNA into RNA using the four ribonucleoside triphosphates as substrates. This is DNA-directed RNA polymerase subunit alpha from Paracidovorax citrulli (strain AAC00-1) (Acidovorax citrulli).